The sequence spans 648 residues: Replication restart protein PriA (648 aa).

The Helicase ATP-binding domain maps to Thr131–Leu297. Gly144–Thr151 contributes to the ATP binding site. A DEAH box motif is present at residues Asp240 to His243. Zn(2+) is bound by residues Cys358, Cys361, Cys367, Cys370, Cys385, Cys388, Cys398, and Cys401. Positions Lys393 to Arg548 constitute a Helicase C-terminal domain.

The protein belongs to the helicase family. PriA subfamily. Component of the replication restart primosome. Requires Zn(2+) as cofactor.

The catalysed reaction is Couples ATP hydrolysis with the unwinding of duplex DNA by translocating in the 3'-5' direction.. It catalyses the reaction ATP + H2O = ADP + phosphate + H(+). In terms of biological role, initiates the restart of stalled replication forks, which reloads the replicative helicase on sites other than the origin of replication. Recognizes and binds to abandoned replication forks and remodels them to uncover a helicase loading site. Promotes assembly of the primosome at these replication forks. In Rickettsia felis (strain ATCC VR-1525 / URRWXCal2) (Rickettsia azadi), this protein is Replication restart protein PriA.